Consider the following 79-residue polypeptide: uncharacterized protein (79 aa).

A signal peptide spans 1 to 24 (MKMNPCTVILCKSLFFFCLFQVDC). Residue asparagine 33 is glycosylated (N-linked (GlcNAc...) asparagine).

The protein localises to the secreted. This is an uncharacterized protein from Saccharomyces cerevisiae (strain ATCC 204508 / S288c) (Baker's yeast).